We begin with the raw amino-acid sequence, 485 residues long: Calcium-dependent protein kinase 27 (485 aa).

G2 carries N-myristoyl glycine lipidation. Residues 28-290 form the Protein kinase domain; it reads YILGEELGRG…AAEVLGHPWM (263 aa). Residues 34–42 and K57 contribute to the ATP site; that span reads LGRGNFGLT. D156 functions as the Proton acceptor in the catalytic mechanism. At S196 the chain carries Phosphoserine. Residues 295–325 are autoinhibitory domain; it reads ASDKPIDGVVLSRLKRFRDANKFKKVVLKFI. EF-hand domains are found at residues 332 to 367, 368 to 403, 404 to 439, and 444 to 474; these read EEIK…LGSN, LSKT…RYKL, DRDE…DGAG, and IKQI…ESSL. Residues D345, D347, S349, N351, E356, D381, D383, N385, T387, E392, D417, D419, D421, H423, E428, D452, D454, D456, K458, and E463 each contribute to the Ca(2+) site.

It belongs to the protein kinase superfamily. Ser/Thr protein kinase family. CDPK subfamily.

Its subcellular location is the membrane. The enzyme catalyses L-seryl-[protein] + ATP = O-phospho-L-seryl-[protein] + ADP + H(+). The catalysed reaction is L-threonyl-[protein] + ATP = O-phospho-L-threonyl-[protein] + ADP + H(+). Its activity is regulated as follows. Activated by calcium. Autophosphorylation may play an important role in the regulation of the kinase activity. May play a role in signal transduction pathways that involve calcium as a second messenger. In Arabidopsis thaliana (Mouse-ear cress), this protein is Calcium-dependent protein kinase 27 (CPK27).